The following is a 246-amino-acid chain: Type III pantothenate kinase (246 aa).

6-13 (DVGNTHSV) lines the ATP pocket. Residue 103–106 (GADR) participates in substrate binding. Catalysis depends on Asp-105, which acts as the Proton acceptor. Residue Asp-125 coordinates K(+). Residue Thr-128 coordinates ATP. Thr-179 is a substrate binding site.

Belongs to the type III pantothenate kinase family. In terms of assembly, homodimer. It depends on NH4(+) as a cofactor. K(+) serves as cofactor.

It localises to the cytoplasm. It catalyses the reaction (R)-pantothenate + ATP = (R)-4'-phosphopantothenate + ADP + H(+). The protein operates within cofactor biosynthesis; coenzyme A biosynthesis; CoA from (R)-pantothenate: step 1/5. Functionally, catalyzes the phosphorylation of pantothenate (Pan), the first step in CoA biosynthesis. This Thermotoga sp. (strain RQ2) protein is Type III pantothenate kinase.